Consider the following 181-residue polypeptide: Probable cobalt-precorrin-6B C(15)-methyltransferase (decarboxylating) (181 aa).

S-adenosyl-L-methionine contacts are provided by residues Thr-16, 40 to 44, Asp-61, and Ala-89; that span reads GCGSG.

This sequence belongs to the methyltransferase superfamily. Archaeal-type CbiT family.

It catalyses the reaction Co-precorrin-6B + S-adenosyl-L-methionine = Co-precorrin-7 + S-adenosyl-L-homocysteine + CO2. It functions in the pathway cofactor biosynthesis; adenosylcobalamin biosynthesis; cob(II)yrinate a,c-diamide from sirohydrochlorin (anaerobic route): step 8/10. Catalyzes the methylation of C-15 in cobalt-precorrin-6B followed by the decarboxylation of C-12 to form cobalt-precorrin-7. The protein is Probable cobalt-precorrin-6B C(15)-methyltransferase (decarboxylating) of Methanococcus maripaludis (strain C5 / ATCC BAA-1333).